Consider the following 347-residue polypeptide: Phenylalanine--tRNA ligase alpha subunit (347 aa).

E265 lines the Mg(2+) pocket.

This sequence belongs to the class-II aminoacyl-tRNA synthetase family. Phe-tRNA synthetase alpha subunit type 1 subfamily. Tetramer of two alpha and two beta subunits. The cofactor is Mg(2+).

It localises to the cytoplasm. The enzyme catalyses tRNA(Phe) + L-phenylalanine + ATP = L-phenylalanyl-tRNA(Phe) + AMP + diphosphate + H(+). The polypeptide is Phenylalanine--tRNA ligase alpha subunit (Wolbachia pipientis wMel).